Consider the following 209-residue polypeptide: Adenylate kinase (209 aa).

10–15 provides a ligand contact to ATP; that stretch reads GAGKGT. Residues 30–59 form an NMP region; it reads STGDLFRAAIKEQTDLGKKVKAVIDSGALV. AMP contacts are provided by residues threonine 31, arginine 36, 57 to 59, 85 to 88, and glutamine 92; these read ALV and GFPR. The segment at 121–158 is LID; the sequence is GRRVCSSCGQSFHIEFVKPKKEGICDSCSGDLMIRPDD. Residue arginine 122 participates in ATP binding. Zn(2+) is bound by residues cysteine 125 and cysteine 128. 131–132 serves as a coordination point for ATP; sequence SF. Residues cysteine 145 and cysteine 148 each contribute to the Zn(2+) site. Residues arginine 155 and arginine 166 each coordinate AMP. Proline 194 is a binding site for ATP.

The protein belongs to the adenylate kinase family. As to quaternary structure, monomer.

The protein localises to the cytoplasm. The enzyme catalyses AMP + ATP = 2 ADP. It participates in purine metabolism; AMP biosynthesis via salvage pathway; AMP from ADP: step 1/1. Functionally, catalyzes the reversible transfer of the terminal phosphate group between ATP and AMP. Plays an important role in cellular energy homeostasis and in adenine nucleotide metabolism. The protein is Adenylate kinase of Treponema denticola (strain ATCC 35405 / DSM 14222 / CIP 103919 / JCM 8153 / KCTC 15104).